The chain runs to 130 residues: Blasticidin-S deaminase (130 aa).

A CMP/dCMP-type deaminase domain is found at 1–129 (MPLSQEESTL…ELLPSGYVWE (129 aa)). Ser-28 provides a ligand contact to substrate. A Zn(2+)-binding site is contributed by Cys-54. Residue Glu-56 is the Proton donor of the active site. Residue Arg-82 coordinates substrate. Cys-88 and Cys-91 together coordinate Zn(2+). Residues Tyr-126 and Trp-128 each coordinate substrate.

This sequence belongs to the cytidine and deoxycytidylate deaminase family. In terms of assembly, homotetramer. Zn(2+) is required as a cofactor.

It catalyses the reaction blasticidin S + H2O + H(+) = deaminohydroxyblasticidin S + NH4(+). Catalyzes the deamination of the cytosine moiety of the antibiotics blasticidin S, cytomycin and acetylblasticidin S. This is Blasticidin-S deaminase (bsd) from Aspergillus terreus.